A 397-amino-acid chain; its full sequence is uncharacterized protein (397 aa).

12 helical membrane-spanning segments follow: residues 10–30 (FIIFVLMICTFSIGYTEYAVM), 48–68 (GLLVTAYAASVCLTGPLVTII), 76–96 (PVLLGLMAIFILSNLMSALAP), 106–126 (ILSASIHGAFFAIAMVFASEM), 141–161 (GGLTVALMLGVPFGSYLGDVL), 165–185 (AVFSIITALGVIGFLGLMAAV), 209–229 (LFSFAITILGYSGVFIAYTFI), 242–262 (VGITGALFAYGLGGVAGNFFA), 274–294 (MIGVMIGLIGVLAVFPYIAIY), 296–316 (AAAIVATFLFGACAFGTPPLL), 334–354 (VSVSAFNLANALGAWIGGMIL), and 363–383 (LFAGGALMTACGLVLSTFAHL).

This sequence belongs to the major facilitator superfamily.

It localises to the cell membrane. This is an uncharacterized protein from Bacillus subtilis (strain 168).